Here is a 157-residue protein sequence, read N- to C-terminus: Probable succinate transporter subunit YjjB (157 aa).

The next 4 membrane-spanning stretches (helical) occupy residues L8 to F28, M50 to V70, V87 to I107, and F129 to W149.

The protein belongs to the ThrE exporter (TC 2.A.79) family. The transporter is composed of YjjB and YjjP.

Its subcellular location is the cell inner membrane. In terms of biological role, involved in succinate export with YjjP. Both proteins are required for export. This is Probable succinate transporter subunit YjjB from Escherichia coli O1:K1 / APEC.